The sequence spans 344 residues: Cyanuric acid amidohydrolase (344 aa).

Residues 1–91 form an RU A region; sequence MTVVDIVKRT…ASAFVGTDRP (91 aa). Substrate-binding positions include Arg-51 and 71–72; that span reads SG. The interval 97 to 232 is RU B; that stretch reads ALVAAVGRTA…CHILVLGNSP (136 aa). Lys-146 is an active-site residue. Residues Arg-178 and 215-216 each bind substrate; that span reads SS. The active-site Nucleophile is the Ser-215. Positions 238–344 are RU C; that stretch reads LRAVHGVMRD…PVTVVYRVAS (107 aa). Mg(2+) is bound at residue Glu-276. Substrate is bound by residues Arg-303 and 322-323; that span reads SG. Positions 325, 328, 329, 330, and 333 each coordinate Mg(2+).

The protein belongs to the cyclic amide hydrolase (CyAH) family. As to quaternary structure, homotetramer.

The enzyme catalyses cyanurate + H2O = 1-carboxybiuret + H(+). The protein operates within xenobiotic degradation; atrazine degradation; biuret from cyanurate: step 1/1. Its activity is regulated as follows. Inhibited by barbituric acid. Responsible for the hydrolysis of cyanuric acid, an intermediate formed during catabolism of s-triazine based compounds in herbicides such as atrazine and polymers such as melamine. Catalyzes the hydrolytic opening of the s-triazine ring of cyanuric acid (2,4,6-trihydroxy-s-triazine) to yield carbon dioxide and carboxybiuret, which spontaneously decarboxylates to biuret. This chain is Cyanuric acid amidohydrolase, found in Pseudonocardia dioxanivorans (strain ATCC 55486 / DSM 44775 / JCM 13855 / CB1190).